The following is a 432-amino-acid chain: MAAAAGRSAWLAAWGGRLRRGLAAGRRAVPTRGPLAAAVAGVALAGAGAAWHHGRVKAAAREGSRTVSAQKNYLGPIEKLSLRKQRFMQFSSLEHDGEYYMTPRDFLFSVMFEQVERKTLVKKLAKKDIEDVLSGIQTARCGSTFFRDLGDKGVISYTEYLFLLTILTKPHSGFHVAFKMLDVDGNEMIERKEFVKLQKIISKQDGFKTVKTNETEYQDPTVKEPGVNTTLQVRFFGKRGEKKLHYKEFRRFMENLQTEVQEMEFLQFSKGLNFMRKEDFAEWLLFFTNTENKDIYWRNVREKLSVGESISLDEFKSFCHFTTHLEDFAIAMQMFSLAHRPVRLAEFKRAVKVATGQELSDNLLDTVFKIFDLDGDECLSHGEFLGVLKNRMHRGLWVSQQQSVQEYWKCVKKESIKGVKEAWRQQAGKGPF.

The N-terminal 22 residues, 1–22 (MAAAAGRSAWLAAWGGRLRRGL), are a transit peptide targeting the mitochondrion. The 36-residue stretch at 169-204 (KPHSGFHVAFKMLDVDGNEMIERKEFVKLQKIISKQ) folds into the EF-hand 1 domain. Ca(2+) is bound by residues Asp-182, Asp-184, Asn-186, Met-188, Glu-190, and Glu-193. The residue at position 202 (Ser-202) is a Phosphoserine. One can recognise an EF-hand 2; degenerate domain in the interval 224-259 (EPGVNTTLQVRFFGKRGEKKLHYKEFRRFMENLQTE). Positions 290-325 (TENKDIYWRNVREKLSVGESISLDEFKSFCHFTTHL) constitute an EF-hand 3; degenerate domain. The EF-hand 4 domain occupies 359–394 (LSDNLLDTVFKIFDLDGDECLSHGEFLGVLKNRMHR). Residues Asp-372, Asp-374, Asp-376, Cys-378, and Glu-383 each coordinate Ca(2+).

It belongs to the MICU1 family. MICU2 subfamily. As to quaternary structure, heterodimer; disulfide-linked; heterodimerizes with MICU1. Component of the uniplex complex, composed of MCU, EMRE/SMDT1, MICU1 and MICU2 in a 4:4:1:1 stoichiometry. In terms of tissue distribution, predominantly expressed in stomach, intestine, skeletal muscle, kidney, heart, testis, prostate and uterus.

It is found in the mitochondrion intermembrane space. The protein localises to the mitochondrion inner membrane. Calcium sensor of the mitochondrial calcium uniporter (MCU) channel, which senses calcium level via its EF-hand domains. MICU1 and MICU2 form a disulfide-linked heterodimer that stimulates and inhibits MCU activity, depending on the concentration of calcium. At low calcium levels, MICU1 occludes the pore of the MCU channel, preventing mitochondrial calcium uptake. At higher calcium levels, calcium-binding to MICU1 and MICU2 induces a conformational change that weakens MCU-MICU1 interactions and moves the MICU1-MICU2 heterodimer away from the pore, allowing calcium permeation through the MCU channel. The chain is Calcium uptake protein 2, mitochondrial from Mus musculus (Mouse).